Reading from the N-terminus, the 39-residue chain is MTIDRTYPIFTVRWLAIHGLAVPTVFSLGSISAMQFIQR.

Residues 14–30 form a helical membrane-spanning segment; that stretch reads WLAIHGLAVPTVFSLGS. Position 18 (His-18) interacts with heme.

This sequence belongs to the PsbE/PsbF family. As to quaternary structure, heterodimer of an alpha subunit and a beta subunit. PSII is composed of 1 copy each of membrane proteins PsbA, PsbB, PsbC, PsbD, PsbE, PsbF, PsbH, PsbI, PsbJ, PsbK, PsbL, PsbM, PsbT, PsbX, PsbY, PsbZ, Psb30/Ycf12, at least 3 peripheral proteins of the oxygen-evolving complex and a large number of cofactors. It forms dimeric complexes. It depends on heme b as a cofactor.

The protein localises to the plastid. It localises to the chloroplast thylakoid membrane. This b-type cytochrome is tightly associated with the reaction center of photosystem II (PSII). PSII is a light-driven water:plastoquinone oxidoreductase that uses light energy to abstract electrons from H(2)O, generating O(2) and a proton gradient subsequently used for ATP formation. It consists of a core antenna complex that captures photons, and an electron transfer chain that converts photonic excitation into a charge separation. This chain is Cytochrome b559 subunit beta, found in Huperzia lucidula (Shining clubmoss).